Reading from the N-terminus, the 78-residue chain is Small integral membrane protein 1 (78 aa).

Met-1 carries the N-acetylmethionine modification. The span at 1 to 18 shows a compositional bias: basic and acidic residues; the sequence is MQPQESHVHYSRWEDGSR. Positions 1 to 20 are disordered; that stretch reads MQPQESHVHYSRWEDGSRDG. Residues 1–46 are Cytoplasmic-facing; it reads MQPQESHVHYSRWEDGSRDGVSLGAVSSTEEASRCRRISQRLCTGK. 4 positions are modified to phosphoserine: Ser-6, Ser-17, Ser-22, and Ser-27. The chain crosses the membrane as a helical; Signal-anchor for type II membrane protein span at residues 47-67; sequence LGIAMKVLGGVALFWIIFILG. Over 68–78 the chain is Extracellular; it reads YLTGYYVHKCK. The interval 68–78 is displays the Vel antigen; that stretch reads YLTGYYVHKCK.

This sequence belongs to the SMIM1 family. In terms of assembly, homooligomer; disulfide-linked. As to expression, highly expressed in the bone marrow and expressed at lower levels in non-hematopoietic tissues. Highly expressed in erythroleukemia cell lines. Up-regulated in CD34+ hematopoietic progenitors cultured toward red blood cells.

The protein resides in the cell membrane. In terms of biological role, regulator of red blood cell formation. The protein is Small integral membrane protein 1 of Homo sapiens (Human).